Here is a 289-residue protein sequence, read N- to C-terminus: Segregation and condensation protein A (289 aa).

Positions 1 to 18 (MSEDRRSPTDEAPREGEL) are enriched in basic and acidic residues. The segment at 1–24 (MSEDRRSPTDEAPREGELPRSPGD) is disordered.

This sequence belongs to the ScpA family. Component of the Structural Maintenance of Chromosome (SMC) condensin-like complex composed of ScpA, ScpB and the Smc homodimer. ScpA and ScpB bind to the head domain of Smc. The presence of the three proteins is required for the association of the complex with DNA.

It localises to the cytoplasm. In terms of biological role, a conditionally essential component of the chromosome segregation machinery. Participates in chromosomal partition during cell division. Important for positioning of ParB-parS complexes (ori of replication) and of the ter replication site, as well as for segration of the ParB-parS complex and thus chromosome segregation. May act via the formation of a condensin-like complex containing Smc, ScpA and ScpB that pulls DNA away from mid-cell into both cell halves. The protein is Segregation and condensation protein A of Myxococcus xanthus (strain DK1622).